A 606-amino-acid chain; its full sequence is Prostaglandin G/H synthase 1 (606 aa).

Residues 1 to 30 (MSRSSPSLRLPVLLLLLLLLLLPPPPPVLP) form the signal peptide. The region spanning 38–76 (PVNPCCYFPCQHQGVCVRVALDRYQCDCTRTGYSGPNCT) is the EGF-like domain. Disulfide bonds link Cys42-Cys53, Cys43-Cys165, Cys47-Cys63, and Cys65-Cys75. Residues Asn74, Asn110, and Asn150 are each glycosylated (N-linked (GlcNAc...) asparagine). His213 functions as the Proton acceptor in the catalytic mechanism. The For cyclooxygenase activity role is filled by Tyr391. His394 is a heme b binding site. Asn416 is a glycosylation site (N-linked (GlcNAc...) asparagine). Cysteines 575 and 581 form a disulfide.

Belongs to the prostaglandin G/H synthase family. As to quaternary structure, homodimer. The cofactor is heme b.

The protein resides in the microsome membrane. It localises to the endoplasmic reticulum membrane. The enzyme catalyses (5Z,8Z,11Z,14Z)-eicosatetraenoate + AH2 + 2 O2 = prostaglandin H2 + A + H2O. It catalyses the reaction (5Z,8Z,11Z,14Z)-eicosatetraenoate + 2 O2 = prostaglandin G2. It carries out the reaction prostaglandin G2 + AH2 = prostaglandin H2 + A + H2O. The catalysed reaction is (9Z,12Z)-octadecadienoate + AH2 + O2 = (9R)-hydroxy-(10E,12Z)-octadecadienoate + A + H2O. The enzyme catalyses (9Z,12Z)-octadecadienoate + AH2 + O2 = (9S)-hydroxy-(10E,12Z)-octadecadienoate + A + H2O. It catalyses the reaction (9Z,12Z)-octadecadienoate + AH2 + O2 = (13S)-hydroxy-(9Z,11E)-octadecadienoate + A + H2O. It carries out the reaction (9Z,12Z)-octadecadienoate + AH2 + O2 = (13R)-hydroxy-(9Z,11E)-octadecadienoate + A + H2O. It functions in the pathway lipid metabolism; prostaglandin biosynthesis. Its activity is regulated as follows. The cyclooxygenase activity is inhibited by nonsteroidal anti-inflammatory drugs (NSAIDs) including ibuprofen, flurbiprofen, ketoprofen, naproxen, flurbiprofen, anirolac, fenclofenac and diclofenac. In terms of biological role, dual cyclooxygenase and peroxidase that plays an important role in the biosynthesis pathway of prostanoids, a class of C20 oxylipins mainly derived from arachidonate ((5Z,8Z,11Z,14Z)-eicosatetraenoate, AA, C20:4(n-6)), with a particular role in the inflammatory response. The cyclooxygenase activity oxygenates AA to the hydroperoxy endoperoxide prostaglandin G2 (PGG2), and the peroxidase activity reduces PGG2 to the hydroxy endoperoxide prostaglandin H2 (PGH2), the precursor of all 2-series prostaglandins and thromboxanes. This complex transformation is initiated by abstraction of hydrogen at carbon 13 (with S-stereochemistry), followed by insertion of molecular O2 to form the endoperoxide bridge between carbon 9 and 11 that defines prostaglandins. The insertion of a second molecule of O2 (bis-oxygenase activity) yields a hydroperoxy group in PGG2 that is then reduced to PGH2 by two electrons. Involved in the constitutive production of prostanoids in particular in the stomach and platelets. In gastric epithelial cells, it is a key step in the generation of prostaglandins, such as prostaglandin E2 (PGE2), which plays an important role in cytoprotection. In platelets, it is involved in the generation of thromboxane A2 (TXA2), which promotes platelet activation and aggregation, vasoconstriction and proliferation of vascular smooth muscle cells. Can also use linoleate (LA, (9Z,12Z)-octadecadienoate, C18:2(n-6)) as substrate and produce hydroxyoctadecadienoates (HODEs) in a regio- and stereospecific manner, being (9R)-HODE ((9R)-hydroxy-(10E,12Z)-octadecadienoate) and (13S)-HODE ((13S)-hydroxy-(9Z,11E)-octadecadienoate) its major products. The polypeptide is Prostaglandin G/H synthase 1 (PTGS1) (Oryctolagus cuniculus (Rabbit)).